The following is a 136-amino-acid chain: Large ribosomal subunit protein uL16c (136 aa).

It belongs to the universal ribosomal protein uL16 family. Part of the 50S ribosomal subunit.

It localises to the plastid. It is found in the chloroplast. In Chloranthus spicatus (Chulantree), this protein is Large ribosomal subunit protein uL16c.